Reading from the N-terminus, the 360-residue chain is Photosystem II protein D1 2 (360 aa).

The Cytoplasmic portion of the chain corresponds to 1–31 (MTTTLQQRESASLWEQFCQWVTSTNNRIYVG). A helical membrane pass occupies residues 32–53 (WFGTLMIPTLLTATTCFIIAFI). Topologically, residues 54-110 (AAPPVDIDGIREPVAGSLLYGNNIISGAVVPSSNAIGLHFYPIWEAASLDEWLYNGG) are lumenal, thylakoid. A helical transmembrane segment spans residues 111–134 (PYQLVVFHFLIGIFCYMGRQWELS). Residue His-118 participates in chlorophyll a binding. Tyr-126 contributes to the pheophytin a binding site. At 135–142 (YRLGMRPW) the chain is on the cytoplasmic side. A helical membrane pass occupies residues 143–161 (ICVAYSAPVSAATAVFLIY). Tyr-147 is a binding site for pheophytin a. At 162–191 (PIGQGSFSDGMPLGISGTFNFMIVFQAEHN) the chain is on the lumenal, thylakoid side. Residues Asp-170 and Glu-189 each contribute to the [CaMn4O5] cluster site. Residues 192 to 218 (ILMHPFHMLGVAGVFGGSLFSAMHGSL) form a helical membrane-spanning segment. His-198 lines the chlorophyll a pocket. 3 residues coordinate a quinone: His-215, Ser-264, and Phe-265. Fe cation is bound at residue His-215. At 219–270 (VTSSLVRETTEVESQNYGYKFGQEEETYNIVAAHGYFGRLIFQYASFNNSRS) the chain is on the cytoplasmic side. The chain crosses the membrane as a helical span at residues 271–295 (LHFFLGAWPVIGIWFTAMGVSTMAF). A Fe cation-binding site is contributed by His-272. Residues 296–360 (NLNGFNFNQS…VALTAPAVNG (65 aa)) lie on the Lumenal, thylakoid side of the membrane. Residues His-332, Glu-333, His-337, Asp-342, and Ala-344 each contribute to the [CaMn4O5] cluster site. Positions 345–360 (SGEQAPVALTAPAVNG) are excised as a propeptide.

Belongs to the reaction center PufL/M/PsbA/D family. In terms of assembly, PSII is composed of 1 copy each of membrane proteins PsbA, PsbB, PsbC, PsbD, PsbE, PsbF, PsbH, PsbI, PsbJ, PsbK, PsbL, PsbM, PsbT, PsbX, PsbY, PsbZ, Psb30/Ycf12, peripheral proteins PsbO, CyanoQ (PsbQ), PsbU, PsbV and a large number of cofactors. It forms dimeric complexes. Requires The D1/D2 heterodimer binds P680, chlorophylls that are the primary electron donor of PSII, and subsequent electron acceptors. It shares a non-heme iron and each subunit binds pheophytin, quinone, additional chlorophylls, carotenoids and lipids. D1 provides most of the ligands for the Mn4-Ca-O5 cluster of the oxygen-evolving complex (OEC). There is also a Cl(-1) ion associated with D1 and D2, which is required for oxygen evolution. The PSII complex binds additional chlorophylls, carotenoids and specific lipids. as cofactor. In terms of processing, C-terminally processed by CtpA; processing is essential to allow assembly of the oxygen-evolving complex and photosynthetic growth. Tyr-161 forms a radical intermediate that is referred to as redox-active TyrZ, YZ or Y-Z.

It localises to the cellular thylakoid membrane. The enzyme catalyses 2 a plastoquinone + 4 hnu + 2 H2O = 2 a plastoquinol + O2. In terms of biological role, photosystem II (PSII) is a light-driven water:plastoquinone oxidoreductase that uses light energy to abstract electrons from H(2)O, generating O(2) and a proton gradient subsequently used for ATP formation. It consists of a core antenna complex that captures photons, and an electron transfer chain that converts photonic excitation into a charge separation. The D1/D2 (PsbA/PsbD) reaction center heterodimer binds P680, the primary electron donor of PSII as well as several subsequent electron acceptors. The protein is Photosystem II protein D1 2 of Synechocystis sp. (strain ATCC 27184 / PCC 6803 / Kazusa).